Reading from the N-terminus, the 341-residue chain is Two-component response regulator ORR30 (341 aa).

One can recognise a Response regulatory domain in the interval R12 to F127. Residue D63 is modified to 4-aspartylphosphate. The region spanning D195–K254 is the HTH myb-type domain. The segment at residues P225 to R250 is a DNA-binding region (H-T-H motif).

Belongs to the ARR family. Type-B subfamily. Two-component system major event consists of a His-to-Asp phosphorelay between a sensor histidine kinase (HK) and a response regulator (RR). In plants, the His-to-Asp phosphorelay involves an additional intermediate named Histidine-containing phosphotransfer protein (HPt). This multistep phosphorelay consists of a His-Asp-His-Asp sequential transfer of a phosphate group between first a His and an Asp of the HK protein, followed by the transfer to a conserved His of the HPt protein and finally the transfer to an Asp in the receiver domain of the RR protein.

The protein localises to the nucleus. In terms of biological role, transcriptional activator that acts as a floral inducer to promote short-day (SD) flowering pathway. Activates HD3A and other FT-like genes independently from HD1. May also activate MADS-box transcription factors involved in flowering regulation. Functions as a response regulator involved in His-to-Asp phosphorelay signal transduction system. Phosphorylation of the Asp residue in the receiver domain activates the ability of the protein to promote the transcription of target genes. May directly activate some type-A response regulators in response to cytokinins. The polypeptide is Two-component response regulator ORR30 (Oryza sativa subsp. japonica (Rice)).